The chain runs to 206 residues: Holliday junction branch migration complex subunit RuvA (206 aa).

The domain I stretch occupies residues 1–64 (MIGKLKGVLD…EDMIRLYGFR (64 aa)). The interval 65-144 (TVLEREWFRL…AFAGEAAGAI (80 aa)) is domain II. A flexible linker region spans residues 145–154 (GLKQDLGEGV). A domain III region spans residues 154–206 (VAPAPVSDAVSALANLGYSRDIAANAVAAALKSAGEGADTGTLIRLGLKELAR).

Belongs to the RuvA family. As to quaternary structure, homotetramer. Forms an RuvA(8)-RuvB(12)-Holliday junction (HJ) complex. HJ DNA is sandwiched between 2 RuvA tetramers; dsDNA enters through RuvA and exits via RuvB. An RuvB hexamer assembles on each DNA strand where it exits the tetramer. Each RuvB hexamer is contacted by two RuvA subunits (via domain III) on 2 adjacent RuvB subunits; this complex drives branch migration. In the full resolvosome a probable DNA-RuvA(4)-RuvB(12)-RuvC(2) complex forms which resolves the HJ.

It localises to the cytoplasm. In terms of biological role, the RuvA-RuvB-RuvC complex processes Holliday junction (HJ) DNA during genetic recombination and DNA repair, while the RuvA-RuvB complex plays an important role in the rescue of blocked DNA replication forks via replication fork reversal (RFR). RuvA specifically binds to HJ cruciform DNA, conferring on it an open structure. The RuvB hexamer acts as an ATP-dependent pump, pulling dsDNA into and through the RuvAB complex. HJ branch migration allows RuvC to scan DNA until it finds its consensus sequence, where it cleaves and resolves the cruciform DNA. This Chelativorans sp. (strain BNC1) protein is Holliday junction branch migration complex subunit RuvA.